The following is a 308-amino-acid chain: uncharacterized protein (308 aa).

This is an uncharacterized protein from Bacillus subtilis (strain 168).